Consider the following 448-residue polypeptide: Selenide, water dikinase 2 (448 aa).

An N-acetylalanine modification is found at Ala2. Position 46 is a phosphoserine (Ser46). Sec60 is a catalytic residue. Residue Sec60 is a non-standard amino acid, selenocysteine. An ATP-binding site is contributed by Lys63. Positions 85 to 107 (LGRGLVGGQEEASQEAGLPAGAG) are disordered. Ser97 is modified (phosphoserine). ATP contacts are provided by residues 118 to 120 (GMD), Asp138, Asp161, and 212 to 215 (GGQT). Mg(2+) is bound at residue Asp120. Residue Asp161 participates in Mg(2+) binding. Asp316 lines the Mg(2+) pocket.

It belongs to the selenophosphate synthase 1 family. Class I subfamily. As to quaternary structure, homodimer. Mg(2+) is required as a cofactor. Post-translationally, truncated SEPHS2 proteins produced by failed UGA/Sec decoding are ubiquitinated by the CRL2(KLHDC3) complex, which recognizes the glycine (Gly) at the C-terminus of truncated SEPHS2 proteins.

The catalysed reaction is hydrogenselenide + ATP + H2O = selenophosphate + AMP + phosphate + 2 H(+). Its function is as follows. Synthesizes selenophosphate from selenide and ATP. This is Selenide, water dikinase 2 (SEPHS2) from Homo sapiens (Human).